Reading from the N-terminus, the 66-residue chain is Toxin Boma6b (66 aa).

In terms of domain architecture, LCN-type CS-alpha/beta spans 2–64 (RDAYIAQNYN…VPIKVEGKCH (63 aa)). Cystine bridges form between cysteine 12–cysteine 63, cysteine 16–cysteine 36, cysteine 22–cysteine 46, and cysteine 26–cysteine 48.

It belongs to the long (4 C-C) scorpion toxin superfamily. Sodium channel inhibitor family. Alpha subfamily. Expressed by the venom gland.

It is found in the secreted. Alpha toxins bind voltage-independently at site-3 of sodium channels (Nav) and inhibit the inactivation of the activated channels, thereby blocking neuronal transmission. The protein is Toxin Boma6b of Buthus occitanus mardochei (Moroccan scorpion).